Reading from the N-terminus, the 396-residue chain is MSWSFLTRLLEEIHNHSTFVGKIWLTVLIVFRIVLTAVGGESIYYDEQSKFVCNTEQPGCENVCYDAFAPLSHVRFWVFQIILVATPSVMYLGYAIHKIAKMEHGEADKKAARSKPYAMRWKQHRALEETEEDHEEDPMMYPEMELESEKENKEQNQSKPKHDGRRRIREDGLMKIYVLQLLARTMFEVGFLIGQYFLYGFQVHPFYVCSRVPCPHKIDCFISRPTEKTIFLLIMYGVTGLCLLLNIWEMLHLGFGTIRDSLNSKRRELEDPGAYNYPFTWNTPSAPPGYNIAVKPDQIQYTELSNAKIAYKQNKANIAQEQQYGSHEETLPADLETLQREIRMAQERLDLAIQAYNHQNNPHGPREKKAKVGSKAGSNKSSASSKSGDGKTSVWI.

Residues 1 to 22 lie on the Cytoplasmic side of the membrane; that stretch reads MSWSFLTRLLEEIHNHSTFVGK. The helical transmembrane segment at 23–45 threads the bilayer; it reads IWLTVLIVFRIVLTAVGGESIYY. Residues 46–75 are Extracellular-facing; the sequence is DEQSKFVCNTEQPGCENVCYDAFAPLSHVR. Residues 76–95 form a helical membrane-spanning segment; sequence FWVFQIILVATPSVMYLGYA. Topologically, residues 96-175 are cytoplasmic; the sequence is IHKIAKMEHG…RRIREDGLMK (80 aa). The segment at 145 to 165 is disordered; it reads ELESEKENKEQNQSKPKHDGR. Residues 147 to 156 show a composition bias toward basic and acidic residues; the sequence is ESEKENKEQN. Residues 176 to 198 traverse the membrane as a helical segment; it reads IYVLQLLARTMFEVGFLIGQYFL. At 199–228 the chain is on the extracellular side; the sequence is YGFQVHPFYVCSRVPCPHKIDCFISRPTEK. A helical membrane pass occupies residues 229-248; the sequence is TIFLLIMYGVTGLCLLLNIW. The Cytoplasmic portion of the chain corresponds to 249-396; it reads EMLHLGFGTI…SGDGKTSVWI (148 aa). The interval 357–396 is disordered; that stretch reads NHQNNPHGPREKKAKVGSKAGSNKSSASSKSGDGKTSVWI. The span at 373–396 shows a compositional bias: low complexity; it reads GSKAGSNKSSASSKSGDGKTSVWI.

Belongs to the connexin family. Gamma-type subfamily. As to quaternary structure, a connexon is composed of a hexamer of connexins. Interacts with CNST.

The protein resides in the cell membrane. It is found in the cell junction. Its subcellular location is the gap junction. Its function is as follows. One gap junction consists of a cluster of closely packed pairs of transmembrane channels, the connexons, through which materials of low MW diffuse from one cell to a neighboring cell. This is Gap junction gamma-1 protein (GJC1) from Sus scrofa (Pig).